We begin with the raw amino-acid sequence, 258 residues long: WPVRSAAPSSSAFISANHFSSDDDSSSPRSISPSLASVFLHHTRGFSSNSVSPAHDMGLVPDLPPTVAAIKNPTSKIVYDEHNHERYPPGDPSKRAFAYFVLTGGRFVYASLMRLLILKFVLSMSASKDVLALASLEVDLSSIEPGTTVTVKWRGKPVFIRRRTEDDISLANSVDLGSLRDPQQDAERVKNPEWLVVIGVCTHLGCIPLPNAGDFGGWFCPCHGSHYDISGRIRKGPAPYNLEVPTYSFLEENKLLIG.

A mitochondrion-targeting transit peptide spans 1 to 46 (WPVRSAAPSSSAFISANHFSSDDDSSSPRSISPSLASVFLHHTRGF). The Mitochondrial matrix portion of the chain corresponds to 47–95 (SSNSVSPAHDMGLVPDLPPTVAAIKNPTSKIVYDEHNHERYPPGDPSKR). Residues 96-118 (AFAYFVLTGGRFVYASLMRLLIL) form a helical membrane-spanning segment. At 119 to 258 (KFVLSMSASK…FLEENKLLIG (140 aa)) the chain is on the mitochondrial intermembrane side. One can recognise a Rieske domain in the interval 161–256 (RRRTEDDISL…YSFLEENKLL (96 aa)). The [2Fe-2S] cluster site is built by cysteine 201, histidine 203, cysteine 220, and histidine 223. Cysteine 206 and cysteine 222 form a disulfide bridge.

Belongs to the Rieske iron-sulfur protein family. As to quaternary structure, component of the ubiquinol-cytochrome c oxidoreductase (cytochrome b-c1 complex, complex III, CIII), a multisubunit enzyme composed of 3 respiratory subunits cytochrome b, cytochrome c1 and Rieske protein, 2 core protein subunits, and several low-molecular weight protein subunits. The complex exists as an obligatory dimer and forms supercomplexes (SCs) in the inner mitochondrial membrane with cytochrome c oxidase (complex IV, CIV). The cofactor is [2Fe-2S] cluster.

It localises to the mitochondrion inner membrane. It carries out the reaction a quinol + 2 Fe(III)-[cytochrome c](out) = a quinone + 2 Fe(II)-[cytochrome c](out) + 2 H(+)(out). Functionally, component of the ubiquinol-cytochrome c oxidoreductase, a multisubunit transmembrane complex that is part of the mitochondrial electron transport chain which drives oxidative phosphorylation. The respiratory chain contains 3 multisubunit complexes succinate dehydrogenase (complex II, CII), ubiquinol-cytochrome c oxidoreductase (cytochrome b-c1 complex, complex III, CIII) and cytochrome c oxidase (complex IV, CIV), that cooperate to transfer electrons derived from NADH and succinate to molecular oxygen, creating an electrochemical gradient over the inner membrane that drives transmembrane transport and the ATP synthase. The cytochrome b-c1 complex catalyzes electron transfer from ubiquinol to cytochrome c, linking this redox reaction to translocation of protons across the mitochondrial inner membrane, with protons being carried across the membrane as hydrogens on the quinol. In the process called Q cycle, 2 protons are consumed from the matrix, 4 protons are released into the intermembrane space and 2 electrons are passed to cytochrome c. The Rieske protein is a catalytic core subunit containing a [2Fe-2S] iron-sulfur cluster. It cycles between 2 conformational states during catalysis to transfer electrons from the quinol bound in the Q(0) site in cytochrome b to cytochrome c1. This Nicotiana tabacum (Common tobacco) protein is Cytochrome b-c1 complex subunit Rieske-1, mitochondrial.